The primary structure comprises 521 residues: Interleukin-9 receptor (521 aa).

Residues M1–V40 form the signal peptide. The Extracellular portion of the chain corresponds to S41–P270. N-linked (GlcNAc...) asparagine glycans are attached at residues N117 and N156. Residues P149–R259 form the Fibronectin type-III domain. The WSXWS motif signature appears at W245–S249. Residues G271–F291 traverse the membrane as a helical segment. Topologically, residues K292–F521 are cytoplasmic. Positions F301–A309 match the Box 1 motif motif. The interval W413–N439 is disordered. Positions S429–N439 are enriched in low complexity.

It belongs to the type I cytokine receptor family. Type 4 subfamily. As to quaternary structure, interacts with IL9.

It localises to the cell membrane. Its subcellular location is the secreted. Plays an important role in the immune response against parasites by acting as a receptor of IL9. The protein is Interleukin-9 receptor (IL9R) of Homo sapiens (Human).